Consider the following 69-residue polypeptide: Large ribosomal subunit protein bL28 (69 aa).

The segment at 1–27 (MSRRCSVSGKGPLVGNNVSHANNKTKR) is disordered.

This sequence belongs to the bacterial ribosomal protein bL28 family.

This is Large ribosomal subunit protein bL28 from Sulfurovum sp. (strain NBC37-1).